The following is a 149-amino-acid chain: 3-dehydroquinate dehydratase (149 aa).

Catalysis depends on Y26, which acts as the Proton acceptor. Residues N77, H83, and D90 each contribute to the substrate site. The active-site Proton donor is H103. Substrate is bound by residues 104 to 105 (LS) and R114.

The protein belongs to the type-II 3-dehydroquinase family. As to quaternary structure, homododecamer.

It carries out the reaction 3-dehydroquinate = 3-dehydroshikimate + H2O. It participates in metabolic intermediate biosynthesis; chorismate biosynthesis; chorismate from D-erythrose 4-phosphate and phosphoenolpyruvate: step 3/7. Its function is as follows. Catalyzes a trans-dehydration via an enolate intermediate. This is 3-dehydroquinate dehydratase (aroQ) from Haemophilus influenzae (strain ATCC 51907 / DSM 11121 / KW20 / Rd).